Reading from the N-terminus, the 232-residue chain is Octanoyltransferase (232 aa).

The 184-residue stretch at 33–216 folds into the BPL/LPL catalytic domain; the sequence is GRAQDTVILL…HLVRALSNGS (184 aa). Substrate-binding positions include 71 to 78, 146 to 148, and 159 to 161; these read RGGRITWH, AIG, and GFA. C177 functions as the Acyl-thioester intermediate in the catalytic mechanism.

Belongs to the LipB family.

The protein resides in the cytoplasm. The enzyme catalyses octanoyl-[ACP] + L-lysyl-[protein] = N(6)-octanoyl-L-lysyl-[protein] + holo-[ACP] + H(+). It functions in the pathway protein modification; protein lipoylation via endogenous pathway; protein N(6)-(lipoyl)lysine from octanoyl-[acyl-carrier-protein]: step 1/2. Functionally, catalyzes the transfer of endogenously produced octanoic acid from octanoyl-acyl-carrier-protein onto the lipoyl domains of lipoate-dependent enzymes. Lipoyl-ACP can also act as a substrate although octanoyl-ACP is likely to be the physiological substrate. This chain is Octanoyltransferase, found in Clavibacter sepedonicus (Clavibacter michiganensis subsp. sepedonicus).